A 656-amino-acid polypeptide reads, in one-letter code: MTGAKRKKRSVLWGKMHTPHREDIKQWCKRRLPILEWAPQYNLKENLLPDTVSGIMLAVQQVAQGLSFAMLSSVHPVFGLYGSLFPAIIYAIFGMGRHVATGTFALTSLISANAVERLVPQSSRNLTTQSNSSVLGLSEFELQRIGVAAAVSFLGGVIQLVMFVLQLGSATFLLTEPVISAMTTGAATHVVTSQVKYLLGIKMPYISGPLGFFYIYAYVFENIKSVQLEALLFSLLSIIVLVLVKELNEQFKRKIKVVLPVDLVLIIAASFACYCTNMENTYGLEVVGHIPNGIPPPRAPPMNILSAVLTEAFGVALVGYVASLALAQGSAKKFKYSVDDNQEFLAHGLSNVIPSFLFCIPSAAAMGRTAGLYSTGAKTQVACLISCIFVLIVIYAIGPLLYWLPMCVLASIIVVGLKGMLIQFRDLKKYWNVDKIDWGIWISTYIFTICFAANVGLLFGVICTIAIVLGRFPRAKTLSITDMKEMELKVKTEMHDETSQQIKIISINNPLVFLNAKKFSADLMKIILKESDSNQPLDDVSKCEQNTLLSSLSNGNCNEEASQPCSSEKCSLVLNCSGLTFFDYTGVSTLVELYLDCKSRSVDVFLANCTASLIKAMTYYGDLDTEKPIFFDSVPAAISIIQSNKNLSKASDHSEV.

Residues 1–75 (MTGAKRKKRS…LSFAMLSSVH (75 aa)) are Cytoplasmic-facing. Residues 76–96 (PVFGLYGSLFPAIIYAIFGMG) traverse the membrane as a helical segment. Residues 97–144 (RHVATGTFALTSLISANAVERLVPQSSRNLTTQSNSSVLGLSEFELQR) are Extracellular-facing. Residues 145 to 165 (IGVAAAVSFLGGVIQLVMFVL) traverse the membrane as a helical segment. Residue glutamine 166 is a topological domain, cytoplasmic. The helical transmembrane segment at 167–187 (LGSATFLLTEPVISAMTTGAA) threads the bilayer. The Extracellular portion of the chain corresponds to 188-199 (THVVTSQVKYLL). A helical membrane pass occupies residues 200–220 (GIKMPYISGPLGFFYIYAYVF). Over 221–222 (EN) the chain is Cytoplasmic. The helical transmembrane segment at 223 to 243 (IKSVQLEALLFSLLSIIVLVL) threads the bilayer. The Extracellular segment spans residues 244–254 (VKELNEQFKRK). Residues 255 to 275 (IKVVLPVDLVLIIAASFACYC) traverse the membrane as a helical segment. The Cytoplasmic portion of the chain corresponds to 276-306 (TNMENTYGLEVVGHIPNGIPPPRAPPMNILS). A helical membrane pass occupies residues 307–327 (AVLTEAFGVALVGYVASLALA). At 328–343 (QGSAKKFKYSVDDNQE) the chain is on the extracellular side. A helical transmembrane segment spans residues 344 to 364 (FLAHGLSNVIPSFLFCIPSAA). Topologically, residues 365-383 (AMGRTAGLYSTGAKTQVAC) are cytoplasmic. 2 consecutive transmembrane segments (helical) span residues 384-404 (LISC…LYWL) and 405-425 (PMCV…IQFR). At 426-448 (DLKKYWNVDKIDWGIWISTYIFT) the chain is on the extracellular side. Residues 449–469 (ICFAANVGLLFGVICTIAIVL) form a helical membrane-spanning segment. Over 470 to 656 (GRFPRAKTLS…LSKASDHSEV (187 aa)) the chain is Cytoplasmic. Residues 492 to 641 (TEMHDETSQQ…DSVPAAISII (150 aa)) enclose the STAS domain. Residues 641–656 (IQSNKNLSKASDHSEV) form a membrane targeting region.

This sequence belongs to the SLC26A/SulP transporter (TC 2.A.53) family. Expressed in the Reissner's membrane epithelial cells in the cochlea (at protein level). Expressed in the retinal pigment epithelium (at protein level). Abundantly expressed in parietal cells on the glandular portion of the stomach. Lower levels are observed in the kidney, with expression in the proximal tubule and thick ascending limb of the loop of Henle. Also expressed in distal segments of nephron, in extraglomerular mesagial cells and a subpopulation of intercalated cells of outer medullary collecting ducts. Expressed in the thyroid gland.

The protein resides in the basolateral cell membrane. The protein localises to the recycling endosome membrane. It is found in the apical cell membrane. Its subcellular location is the lateral cell membrane. The enzyme catalyses chloride(in) = chloride(out). The catalysed reaction is iodide(out) = iodide(in). It carries out the reaction bromide(in) = bromide(out). It catalyses the reaction oxalate(in) = oxalate(out). The enzyme catalyses nitrate(in) = nitrate(out). The catalysed reaction is sulfate(in) = sulfate(out). It carries out the reaction hydrogencarbonate(in) = hydrogencarbonate(out). It catalyses the reaction D-gluconate(in) = D-gluconate(out). The enzyme catalyses thiocyanate(in) = thiocyanate(out). The catalysed reaction is hydrogencarbonate(in) + chloride(out) = hydrogencarbonate(out) + chloride(in). With respect to regulation, regulated by pH. Activity inhibited by all inhibitors of several anion channels and transporters, including 4,4'-Di-isothiocyanatostilbene-2,2'-disulfonic acid (DIDS), diphenylamine-2-carboxylic acid, glybenclamide and 5-Nitro-2-(3-phenylpropyl-amino)benzoic acid. Its function is as follows. Acts as an anion channel mediating the transport of chloride, bromide, iodide, nitrate, sulfate, gluconate, thiocyanate and bicarbonate ions. Its permeability towards bicarbonate is weak and increases when pH is above 7. Mediates oxalate transport. Mediates thiocyanate transport in retinal pigment epithelium cells. Mediates iodide transport in the thyroid gland, playing an important role in the synthesis of thyroid hormones and the maintenance of thyroid function. Although it is an anion channel, according to PubMed:12736153 and PubMed:19723628 it has been shown to exhibit chloride-bicarbonate exchanger activity. This chain is Anion exchange transporter, found in Mus musculus (Mouse).